Here is a 160-residue protein sequence, read N- to C-terminus: Small ribosomal subunit protein uS7 (160 aa).

It belongs to the universal ribosomal protein uS7 family. In terms of assembly, part of the 30S ribosomal subunit. Contacts proteins S9 and S11.

Its function is as follows. One of the primary rRNA binding proteins, it binds directly to 16S rRNA where it nucleates assembly of the head domain of the 30S subunit. Is located at the subunit interface close to the decoding center, probably blocks exit of the E-site tRNA. The sequence is that of Small ribosomal subunit protein uS7 from Ehrlichia canis (strain Jake).